Reading from the N-terminus, the 179-residue chain is ATP synthase subunit delta (179 aa).

The protein belongs to the ATPase delta chain family. In terms of assembly, F-type ATPases have 2 components, F(1) - the catalytic core - and F(0) - the membrane proton channel. F(1) has five subunits: alpha(3), beta(3), gamma(1), delta(1), epsilon(1). F(0) has three main subunits: a(1), b(2) and c(10-14). The alpha and beta chains form an alternating ring which encloses part of the gamma chain. F(1) is attached to F(0) by a central stalk formed by the gamma and epsilon chains, while a peripheral stalk is formed by the delta and b chains.

The protein localises to the cell membrane. In terms of biological role, f(1)F(0) ATP synthase produces ATP from ADP in the presence of a proton or sodium gradient. F-type ATPases consist of two structural domains, F(1) containing the extramembraneous catalytic core and F(0) containing the membrane proton channel, linked together by a central stalk and a peripheral stalk. During catalysis, ATP synthesis in the catalytic domain of F(1) is coupled via a rotary mechanism of the central stalk subunits to proton translocation. Functionally, this protein is part of the stalk that links CF(0) to CF(1). It either transmits conformational changes from CF(0) to CF(1) or is implicated in proton conduction. The polypeptide is ATP synthase subunit delta (Bacillus sp. (strain PS3)).